A 507-amino-acid chain; its full sequence is ATP synthase subunit alpha, chloroplastic (507 aa).

ATP is bound at residue 170–177; it reads GDRQTGKT.

The protein belongs to the ATPase alpha/beta chains family. In terms of assembly, F-type ATPases have 2 components, CF(1) - the catalytic core - and CF(0) - the membrane proton channel. CF(1) has five subunits: alpha(3), beta(3), gamma(1), delta(1), epsilon(1). CF(0) has four main subunits: a, b, b' and c.

The protein resides in the plastid. The protein localises to the chloroplast thylakoid membrane. It catalyses the reaction ATP + H2O + 4 H(+)(in) = ADP + phosphate + 5 H(+)(out). In terms of biological role, produces ATP from ADP in the presence of a proton gradient across the membrane. The alpha chain is a regulatory subunit. The sequence is that of ATP synthase subunit alpha, chloroplastic from Oenothera glazioviana (Large-flowered evening primrose).